A 1116-amino-acid polypeptide reads, in one-letter code: MVNNTFITKLPDFLEIQRSSFCWFLLKGLSYELNSLSPIIDVNVKRVKLKLYPQEFVLKPGRTTPICAKQNDSTYGVRIFLPAEVIYCDTESKYPTKKNRLEDIKEKVFIGQIPLMTSTGSFIVNGCEGYRNQIIRCPGLYYKAEFLNNNIVSTVTIIAQRGSWLKFEFDKNGYWVRIDKEKKISIFDFLEGLNINDEEILSGLKSIAPLLKYKKTQEILKRNNDPDLKNLIEKITDPNSYSLGIIGRLNLNRRLGLNISTRVHTLTIHDIFGIIDFFLSARSFVPDDIDDLRNRRIRAVGELITSQCEIGLNRLERNILERTNFSGSVRILPKTLVNARPIMSAIQEFFNSSQLSHYMDQTNLLSETANKRRISALGPGGLNADRVTVAARDIHPTQYGRLCPIETPEGQNVGLVSTLASYARINRNGFIQTPYFRVENGKILTQQPLIYLTAEQENLKIAPADVKRDQDGYLVDDFIVTRFQSKNFIITPSKLVDFISVSEIQIISVAASLIPFLEHDDANRALMGANMQRQAVPLLYPRKPIVGTGIESQVAFDSRLVNIATKPGIVKYVSSQQIDIKNIEGEKIAYKLIKYRPSNQDTCLNQRPLVWVGQSIKTGQVIADGPGTQSGELALGQNLTVAYMPWQGYNYEDAILVSDKLDIQNLFTSIHIEECETEVQQTKTGEQVITSDIPLVSEKNCKNLDENGIIKVGKYVYPGDILVGKITPKGEIDQLPEAKLLKAIFGFKTPDMRDSSLRVPGGLSGRVLDIKIFKKPKPGKVFGVGSKIRVFIAQISKLQVGDKIAGRHGNKGVISRILPHQDMPFLPDGTSVDIILNPLGVPSRMNVGQIFECLLGLAGDQLNKRFKILPFDEMYQNEASRILINQKLKDAAKKQNKPWLFSAYSPGKILLSDGRTGEKFDNPVLVGRSYILKLAHLVEDKIHARSTGPYSLITQQPVGGKSQNGGQRFGEMEVWALEAFGAAYTLQELLTIKSDDMQGRDDVLNSIVCGQEIPKSSIPESFKVLMRELNALGLDITTYKVMFENETNKNCLIKNEINLMQTYEEGIKAKIREEEKEREKEREAREMEDPEKIVSKIDAKQKKKYKKTKKQTEKKK.

Residues 1070 to 1100 show a composition bias toward basic and acidic residues; that stretch reads KIREEEKEREKEREAREMEDPEKIVSKIDAK. The tract at residues 1070 to 1116 is disordered; the sequence is KIREEEKEREKEREAREMEDPEKIVSKIDAKQKKKYKKTKKQTEKKK. Positions 1101–1116 are enriched in basic residues; sequence QKKKYKKTKKQTEKKK.

Belongs to the RNA polymerase beta chain family. In plastids the minimal PEP RNA polymerase catalytic core is composed of four subunits: alpha, beta, beta', and beta''. When a (nuclear-encoded) sigma factor is associated with the core the holoenzyme is formed, which can initiate transcription.

It localises to the plastid. Its subcellular location is the chloroplast. The catalysed reaction is RNA(n) + a ribonucleoside 5'-triphosphate = RNA(n+1) + diphosphate. Functionally, DNA-dependent RNA polymerase catalyzes the transcription of DNA into RNA using the four ribonucleoside triphosphates as substrates. The sequence is that of DNA-directed RNA polymerase subunit beta from Heterosigma akashiwo (Chromophytic alga).